Reading from the N-terminus, the 155-residue chain is Large ribosomal subunit protein eL24 (155 aa).

The span at 94-129 (RSLKPEVRKAQRDEKKKADKEKKKADKAARKSEKAK) shows a compositional bias: basic and acidic residues. The interval 94-155 (RSLKPEVRKA…AFQKVAATSR (62 aa)) is disordered.

The protein belongs to the eukaryotic ribosomal protein eL24 family.

In Kluyveromyces lactis (strain ATCC 8585 / CBS 2359 / DSM 70799 / NBRC 1267 / NRRL Y-1140 / WM37) (Yeast), this protein is Large ribosomal subunit protein eL24 (RPL24).